The following is a 131-amino-acid chain: Lysozyme C (131 aa).

The C-type lysozyme domain maps to 2–131 (KIYEQCELAR…VSQWIKGCKL (130 aa)). 4 cysteine pairs are disulfide-bonded: Cys7–Cys129, Cys31–Cys117, Cys66–Cys82, and Cys78–Cys96. Catalysis depends on residues Glu36 and Asp54.

It belongs to the glycosyl hydrolase 22 family. As to quaternary structure, monomer.

It is found in the secreted. It carries out the reaction Hydrolysis of (1-&gt;4)-beta-linkages between N-acetylmuramic acid and N-acetyl-D-glucosamine residues in a peptidoglycan and between N-acetyl-D-glucosamine residues in chitodextrins.. Functionally, lysozymes have primarily a bacteriolytic function; those in tissues and body fluids are associated with the monocyte-macrophage system and enhance the activity of immunoagents. Has strong bacteriolytic activity against M.luteus and V.cholerae, weak bacteriolytic activity against P.aeruginosa and no activity against A.hydrophila. This Pelodiscus sinensis (Chinese softshell turtle) protein is Lysozyme C (LYZ).